The following is a 235-amino-acid chain: MANLVFLRHGESIWNKMNIFTGWVDVPLSKGGVKEAKIAGKLLKSYKFDVAYSSELIRALNTLILVMQENKASNFIKINHDSVKMKEWGKVYGAESINYTPVYKSWELNERYYGKLQGLNKERAKEIYGKDDVFLWRRSYETAPPNGESLKDTYERTVPYLKRYILPTLTYGKDVIVTAHGNSLRSIIAYLEKLNSEEVLKLEIPTGVPLVYNLDEKGLKRLGYLNKKGFDNELI.

Substrate-binding positions include 8–15 (RHGESIWN), 21–22 (TG), R58, 110–113 (ERYY), K121, 137–138 (RR), and 181–182 (GN). H9 acts as the Tele-phosphohistidine intermediate in catalysis. Catalysis depends on E110, which acts as the Proton donor/acceptor.

This sequence belongs to the phosphoglycerate mutase family. BPG-dependent PGAM subfamily.

The catalysed reaction is (2R)-2-phosphoglycerate = (2R)-3-phosphoglycerate. It participates in carbohydrate degradation; glycolysis; pyruvate from D-glyceraldehyde 3-phosphate: step 3/5. Its function is as follows. Catalyzes the interconversion of 2-phosphoglycerate and 3-phosphoglycerate. In Methanococcus vannielii (strain ATCC 35089 / DSM 1224 / JCM 13029 / OCM 148 / SB), this protein is 2,3-bisphosphoglycerate-dependent phosphoglycerate mutase.